Reading from the N-terminus, the 997-residue chain is Autophagy-related protein 9 (997 aa).

Over methionine 1–glycine 318 the chain is Cytoplasmic. At serine 19 the chain carries Phosphoserine. Residues valine 29–serine 39 show a composition bias toward polar residues. Positions valine 29–glutamate 88 are disordered. Residues threonine 79–glutamate 88 show a composition bias toward acidic residues. Residues lysine 113 and lysine 121 each participate in a glycyl lysine isopeptide (Lys-Gly) (interchain with G-Cter in ubiquitin) cross-link. Serine 122 carries the post-translational modification Phosphoserine. Disordered regions lie at residues leucine 127–aspartate 159 and histidine 214–histidine 234. Residue lysine 138 forms a Glycyl lysine isopeptide (Lys-Gly) (interchain with G-Cter in ubiquitin) linkage. A phosphoserine mark is found at serine 143 and serine 144. Residues serine 144–aspartate 159 show a composition bias toward acidic residues. Residues alanine 221 to lysine 233 show a composition bias toward polar residues. Residues phenylalanine 319–valine 339 form a helical membrane-spanning segment. Topologically, residues serine 340–lysine 376 are lumenal. Residues phenylalanine 377 to valine 397 form a helical membrane-spanning segment. The Cytoplasmic portion of the chain corresponds to glutamine 398–alanine 538. Residues glycine 539–phenylalanine 559 lie within the membrane without spanning it. The Cytoplasmic portion of the chain corresponds to arginine 560 to leucine 620. A helical transmembrane segment spans residues phenylalanine 621 to valine 641. The Lumenal segment spans residues phenylalanine 642–arginine 656. Serine 657 carries the phosphoserine modification. A helical membrane pass occupies residues serine 657–threonine 677. Residues glutamine 678–arginine 723 are Cytoplasmic-facing. A Glycyl lysine isopeptide (Lys-Gly) (interchain with G-Cter in ubiquitin) cross-link involves residue lysine 701. Residues isoleucine 724–serine 744 lie within the membrane without spanning it. The Cytoplasmic segment spans residues leucine 745 to arginine 997. A phosphoserine mark is found at serine 787 and serine 792. Position 794 is a phosphothreonine (threonine 794). The residue at position 802 (serine 802) is a Phosphoserine. Threonine 804 is subject to Phosphothreonine. Phosphoserine is present on residues serine 831, serine 842, serine 864, serine 948, and serine 969.

This sequence belongs to the ATG9 family. In terms of assembly, homotrimer; forms a homotrimer with a central pore that forms a path between the two membrane leaflets. Interacts with ATG23 and ATG27 to form a cycling complex for trafficking to the PAS. Interacts (via N-terminus) with ATG11, required for recruitment of ATG9 to the PAS for the Cvt pathway during nutrient-rich conditions. Interacts (via N-terminus) with ATG17; required for recruitment to the PAS during autophagy and starved conditions. Interacts with ATG2 and ATG18; required for the retrieval of ATG9 from the PAS to the cytoplasmic pool. Interacts with ATG41. Interacts with the conserved oligomeric Golgi (COG) complex subunits COG3 and COG4. Interacts with TRS85. In terms of processing, phosphorylated by ATG1; phosphorylation is required for autophagy and cytoplasm to vacuole transport (Cvt) vesicle formation. Phosphorylation by ATG1 regulates ATG18 interaction and preautophagosome elongation. Phosphorylation at Ser-122 is required for selective autophagy by regulating anterograde trafficking and interaction with ATG23 and ATG27. Phosphorylation at Ser-122 prevents ubiquitination by the SCF(MET30) complex. Post-translationally, ubiquitinated by the SCF(MET30) complex in normal conditions, leading to its degradation by the proteasome, thereby preventing inappropriate induction of autophagy. Ubiquitination by the SCF(MET30) complex is prevented by phosphorylation at Ser-122.

Its subcellular location is the preautophagosomal structure membrane. It is found in the cytoplasmic vesicle membrane. It localises to the golgi apparatus membrane. The protein resides in the endoplasmic reticulum membrane. The protein localises to the mitochondrion membrane. The enzyme catalyses a 1,2-diacyl-sn-glycero-3-phosphocholine(in) = a 1,2-diacyl-sn-glycero-3-phosphocholine(out). It catalyses the reaction a 1,2-diacyl-sn-glycero-3-phospho-L-serine(in) = a 1,2-diacyl-sn-glycero-3-phospho-L-serine(out). It carries out the reaction a 1,2-diacyl-sn-glycero-3-phosphoethanolamine(in) = a 1,2-diacyl-sn-glycero-3-phosphoethanolamine(out). The catalysed reaction is a 1,2-diacyl-sn-glycero-3-phospho-(1D-myo-inositol-3-phosphate)(in) = a 1,2-diacyl-sn-glycero-3-phospho-(1D-myo-inositol-3-phosphate)(out). Phospholipid scramblase involved in autophagy and cytoplasm to vacuole transport (Cvt) vesicle formation. Cycles between the preautophagosomal structure/phagophore assembly site (PAS) and the cytoplasmic vesicle pool and supplies membrane for the growing autophagosome. Lipid scramblase activity plays a key role in preautophagosomal structure/phagophore assembly by distributing the phospholipids that arrive through ATG2 from the cytoplasmic to the luminal leaflet of the bilayer, thereby driving autophagosomal membrane expansion. Required for mitophagy. Also involved in endoplasmic reticulum-specific autophagic process and is essential for the survival of cells subjected to severe ER stress. Different machineries are required for anterograde trafficking to the PAS during either the Cvt pathway or bulk autophagy and for retrograde trafficking. Recruits vesicle-tethering proteins TRS85 and YPT1 to the autophagosome formation site. Also recruits ATG23 and ATG8 to the PAS. The sequence is that of Autophagy-related protein 9 from Saccharomyces cerevisiae (strain YJM789) (Baker's yeast).